A 188-amino-acid polypeptide reads, in one-letter code: VQ motif-containing protein 18 (188 aa).

Disordered stretches follow at residues 1 to 20, 58 to 92, and 157 to 188; these read MEIT…VSMN, LTGK…HQPV, and GFIF…HNSS. The VQ motif lies at 51-60; it reads FRSLVQSLTG. Positions 161-179 are enriched in low complexity; that stretch reads NNNNNNNNNNNNNNNNNTN.

It is found in the nucleus. Its function is as follows. May function as positive regulator of plant growth. The polypeptide is VQ motif-containing protein 18 (Arabidopsis thaliana (Mouse-ear cress)).